Reading from the N-terminus, the 312-residue chain is MLQYQIDRIEHQVSDDRSQTGIFLIGPLERGQATTLGNSLRRVLMGGLEGSAVTAVRISGVNHEYATVPGVREDVLDILLNCKELTVNSRSQELEIGRLVVTGPAEVKARDLQFSSQVQIVDVDRPIATVHSGHSLELELHVERGVGYRPVDRRNEATTAIDLLQIDAVFMPVKKVNFTIDETAVSEGGSTRERLRMEIVTDGSITPDDAVAEAANQLIELFQPLATVTMVEEVPQEPEPTAEAQIPLEELNLSVRAYNCLKRAQVNSVSDLMGFSYEDLLEIKNFGSKSADEVIEALERIGISIPQSRTSA.

Residues 1-229 form an alpha N-terminal domain (alpha-NTD) region; that stretch reads MLQYQIDRIE…ELFQPLATVT (229 aa). The alpha C-terminal domain (alpha-CTD) stretch occupies residues 246–312; sequence IPLEELNLSV…ISIPQSRTSA (67 aa).

Belongs to the RNA polymerase alpha chain family. In cyanobacteria the RNAP catalytic core is composed of 2 alpha, 1 beta, 1 beta', 1 gamma and 1 omega subunit. When a sigma factor is associated with the core the holoenzyme is formed, which can initiate transcription.

It catalyses the reaction RNA(n) + a ribonucleoside 5'-triphosphate = RNA(n+1) + diphosphate. In terms of biological role, DNA-dependent RNA polymerase catalyzes the transcription of DNA into RNA using the four ribonucleoside triphosphates as substrates. In Prochlorococcus marinus (strain SARG / CCMP1375 / SS120), this protein is DNA-directed RNA polymerase subunit alpha.